Consider the following 239-residue polypeptide: Tumor necrosis factor ligand superfamily member 8 (239 aa).

The interval M1–P36 is disordered. Residues M1–S43 are Cytoplasmic-facing. The chain crosses the membrane as a helical; Signal-anchor for type II membrane protein span at residues Y44–V67. The Extracellular portion of the chain corresponds to Q68–D239. N-linked (GlcNAc...) asparagine glycans are attached at residues N75, N86, N114, N158, N194, and N206. A THD domain is found at S103 to L230. Residues C156 and C182 are joined by a disulfide bond.

Belongs to the tumor necrosis factor family. Homotrimer.

It is found in the membrane. In terms of biological role, cytokine that binds to TNFRSF8/CD30. Induces proliferation of T-cells. The chain is Tumor necrosis factor ligand superfamily member 8 (Tnfsf8) from Mus musculus (Mouse).